Consider the following 236-residue polypeptide: LHFPL tetraspan subfamily member 3 protein (236 aa).

Transmembrane regions (helical) follow at residues Ile-36–Ile-56, Phe-110–Phe-130, Ile-140–Pro-160, and Ile-191–Gly-211.

Belongs to the LHFP family.

It is found in the membrane. The polypeptide is LHFPL tetraspan subfamily member 3 protein (Homo sapiens (Human)).